A 307-amino-acid polypeptide reads, in one-letter code: MNYLEFEVIWGVNNIYSILELKSKLIYEGIFKGKVLETGCKEYSPLVPGDIVLGYIYGSRKVYIDKRASRKNILWRYNRKADLRQTIVSNIDNILIVNSANFPEMKNFFIDRVLVVAEEQNIVPIIVINKIDKGISQRVEEFSEIYKNLGYKVLKTSVKTFEGIKEIKEVLRNSRTSFIGQSGVGKSSLINLIDSKASQSVNEISHKYSRGKHTTVYAISFYSESGIIVDTPGIKEFGIETLPFENLRYYFKEFENFASLCKYKSCLHVSEPCCSVISSLGNGISKLRYESYLKILSELKNYKNYAR.

The 158-residue stretch at 80–237 (KADLRQTIVS…IVDTPGIKEF (158 aa)) folds into the CP-type G domain. Residues 129–132 (NKID) and 180–188 (GQSGVGKSS) each bind GTP. Cys261, Cys266, His268, and Cys274 together coordinate Zn(2+).

It belongs to the TRAFAC class YlqF/YawG GTPase family. RsgA subfamily. Monomer. Associates with 30S ribosomal subunit, binds 16S rRNA. Requires Zn(2+) as cofactor.

The protein resides in the cytoplasm. Its function is as follows. One of several proteins that assist in the late maturation steps of the functional core of the 30S ribosomal subunit. Helps release RbfA from mature subunits. May play a role in the assembly of ribosomal proteins into the subunit. Circularly permuted GTPase that catalyzes slow GTP hydrolysis, GTPase activity is stimulated by the 30S ribosomal subunit. The protein is Small ribosomal subunit biogenesis GTPase RsgA of Borreliella afzelii (strain PKo) (Borrelia afzelii).